The sequence spans 83 residues: MQNDAGEFVDLYVPRKCSASNRIIAAKDHASIQMNVAEVDRTTGRFNGQFKTYGICGAIRRMGESDDSILRLAKADGIVSKNF.

At Met1 the chain carries N-acetylmethionine. At Lys81 the chain carries N6-acetyllysine.

Belongs to the eukaryotic ribosomal protein eS21 family. In terms of assembly, component of the 40S small ribosomal subunit.

The protein localises to the cytoplasm. The protein resides in the cytosol. Its subcellular location is the rough endoplasmic reticulum. Its function is as follows. Component of the small ribosomal subunit. The ribosome is a large ribonucleoprotein complex responsible for the synthesis of proteins in the cell. The protein is Small ribosomal subunit protein eS21 (Rps21) of Mus musculus (Mouse).